A 102-amino-acid chain; its full sequence is uncharacterized protein (102 aa).

Residues 1–21 (MAESVNENNNNAGDSNGSGRT) form a disordered region. N16 carries N-linked (GlcNAc...) asparagine glycosylation. The helical transmembrane segment at 24-44 (NTIVTIVVVVIVVTLIIILAT) threads the bilayer. Positions 49 to 102 (IGGSGKKVGAEEPATKLSSKSDDRNGGPNKKSPAKGSSKDDNNTEESVQSNLYG) are disordered. Positions 56–73 (VGAEEPATKLSSKSDDRN) are enriched in basic and acidic residues. N-linked (GlcNAc...) asparagine glycosylation occurs at N90. The span at 93–102 (EESVQSNLYG) shows a compositional bias: polar residues.

It is found in the membrane. This is an uncharacterized protein from Encephalitozoon cuniculi (strain GB-M1) (Microsporidian parasite).